We begin with the raw amino-acid sequence, 31 residues long: Cytochrome b6-f complex subunit 6 (31 aa).

Residues 4–24 (ITSYFGFLLAALTITSAIFIG) traverse the membrane as a helical segment.

It belongs to the PetL family. The 4 large subunits of the cytochrome b6-f complex are cytochrome b6, subunit IV (17 kDa polypeptide, PetD), cytochrome f and the Rieske protein, while the 4 small subunits are PetG, PetL, PetM and PetN. The complex functions as a dimer.

Its subcellular location is the plastid. The protein localises to the chloroplast thylakoid membrane. Its function is as follows. Component of the cytochrome b6-f complex, which mediates electron transfer between photosystem II (PSII) and photosystem I (PSI), cyclic electron flow around PSI, and state transitions. PetL is important for photoautotrophic growth as well as for electron transfer efficiency and stability of the cytochrome b6-f complex. The polypeptide is Cytochrome b6-f complex subunit 6 (Ficus carica (Common fig)).